Reading from the N-terminus, the 111-residue chain is Cytochrome b-c1 complex subunit 7 (111 aa).

Ala2 is subject to N-acetylalanine. Lys19 is modified (N6-acetyllysine). Lys78 is modified (N6-acetyllysine; alternate). Lys78 carries the post-translational modification N6-succinyllysine; alternate. Lys83 is modified (N6-acetyllysine). Position 88 is an N6-acetyllysine; alternate (Lys88). Position 88 is an N6-succinyllysine; alternate (Lys88). Lys96 carries the post-translational modification N6-acetyllysine.

The protein belongs to the UQCRB/QCR7 family. As to quaternary structure, component of the ubiquinol-cytochrome c oxidoreductase (cytochrome b-c1 complex, complex III, CIII), a multisubunit enzyme composed of 11 subunits. The complex is composed of 3 respiratory subunits cytochrome b, cytochrome c1 and Rieske protein UQCRFS1, 2 core protein subunits UQCRC1/QCR1 and UQCRC2/QCR2, and 6 low-molecular weight protein subunits UQCRH/QCR6, UQCRB/QCR7, UQCRQ/QCR8, UQCR10/QCR9, UQCR11/QCR10 and subunit 9, the cleavage product of Rieske protein UQCRFS1. The complex exists as an obligatory dimer and forms supercomplexes (SCs) in the inner mitochondrial membrane with NADH-ubiquinone oxidoreductase (complex I, CI) and cytochrome c oxidase (complex IV, CIV), resulting in different assemblies (supercomplex SCI(1)III(2)IV(1) and megacomplex MCI(2)III(2)IV(2)).

It localises to the mitochondrion inner membrane. Component of the ubiquinol-cytochrome c oxidoreductase, a multisubunit transmembrane complex that is part of the mitochondrial electron transport chain which drives oxidative phosphorylation. The respiratory chain contains 3 multisubunit complexes succinate dehydrogenase (complex II, CII), ubiquinol-cytochrome c oxidoreductase (cytochrome b-c1 complex, complex III, CIII) and cytochrome c oxidase (complex IV, CIV), that cooperate to transfer electrons derived from NADH and succinate to molecular oxygen, creating an electrochemical gradient over the inner membrane that drives transmembrane transport and the ATP synthase. The cytochrome b-c1 complex catalyzes electron transfer from ubiquinol to cytochrome c, linking this redox reaction to translocation of protons across the mitochondrial inner membrane, with protons being carried across the membrane as hydrogens on the quinol. In the process called Q cycle, 2 protons are consumed from the matrix, 4 protons are released into the intermembrane space and 2 electrons are passed to cytochrome c. The polypeptide is Cytochrome b-c1 complex subunit 7 (UQCRB) (Bos taurus (Bovine)).